The primary structure comprises 870 residues: Translation initiation factor IF-2 (870 aa).

A disordered region spans residues serine 49–glutamate 284. 2 stretches are compositionally biased toward basic and acidic residues: residues arginine 70–glycine 81 and glutamine 94–serine 109. Residues lysine 116–lysine 127 show a composition bias toward low complexity. Composition is skewed to basic and acidic residues over residues alanine 144–glutamine 159 and asparagine 168–valine 183. Residues arginine 254–glutamate 279 show a composition bias toward basic residues. Residues lysine 371–lysine 540 enclose the tr-type G domain. Residues glycine 380–threonine 387 are G1. Glycine 380–threonine 387 serves as a coordination point for GTP. The segment at glycine 405–lysine 409 is G2. The G3 stretch occupies residues aspartate 426–glycine 429. Residues aspartate 426–histidine 430 and asparagine 480–aspartate 483 each bind GTP. Residues asparagine 480 to aspartate 483 form a G4 region. Residues serine 516–arginine 518 are G5.

The protein belongs to the TRAFAC class translation factor GTPase superfamily. Classic translation factor GTPase family. IF-2 subfamily.

The protein resides in the cytoplasm. One of the essential components for the initiation of protein synthesis. Protects formylmethionyl-tRNA from spontaneous hydrolysis and promotes its binding to the 30S ribosomal subunits. Also involved in the hydrolysis of GTP during the formation of the 70S ribosomal complex. The chain is Translation initiation factor IF-2 from Lactobacillus helveticus (strain DPC 4571).